Reading from the N-terminus, the 437-residue chain is Homogentisate 1,2-dioxygenase (437 aa).

H295 (proton acceptor) is an active-site residue. Fe cation-binding residues include H338 and E344. Homogentisate-binding residues include Y353 and H374. H374 provides a ligand contact to Fe cation.

This sequence belongs to the homogentisate dioxygenase family. As to quaternary structure, hexamer; dimer of trimers. It depends on Fe cation as a cofactor.

The enzyme catalyses homogentisate + O2 = 4-maleylacetoacetate + H(+). Its pathway is amino-acid degradation; L-phenylalanine degradation; acetoacetate and fumarate from L-phenylalanine: step 4/6. Functionally, involved in the catabolism of homogentisate (2,5-dihydroxyphenylacetate or 2,5-OH-PhAc), a central intermediate in the degradation of phenylalanine and tyrosine. Catalyzes the oxidative ring cleavage of the aromatic ring of homogentisate to yield maleylacetoacetate. The polypeptide is Homogentisate 1,2-dioxygenase (Myxococcus xanthus (strain DK1622)).